A 61-amino-acid polypeptide reads, in one-letter code: Defensin BmKDfsin1 (61 aa).

The N-terminal stretch at 1-25 (MKTIVLLFVLVLVFALLVKMGMVEA) is a signal peptide. Intrachain disulfides connect C29–C50, C36–C58, and C40–C60.

Belongs to the invertebrate defensin family. Type 2 subfamily. Highly expressed in non-venom gland (hemolymph) and moderately expressed in venom gland.

Its subcellular location is the secreted. In terms of biological role, antibacterial peptide active against Gram-positive bacteria, but not on Gram-negative bacteria. Also has weak blocking activity on Kv1.1/KCNA1, Kv1.2/KCNA2, Kv1.3/KCNA3, KCa3.1/KCNN4/IK, KCa2.3/KCNN3/SK3 and Kv11.1/KCNH2/ERG1 channels (tested at 1 uM). It inhibits potassium channel current by interacting with the pore region. The chain is Defensin BmKDfsin1 from Olivierus martensii (Manchurian scorpion).